A 658-amino-acid chain; its full sequence is Sulfate transporter 3.1 (658 aa).

The Cytoplasmic portion of the chain corresponds to 1–85 (MGTEDYTFPQ…RYNLKFFKSD (85 aa)). The chain crosses the membrane as a helical span at residues 86 to 106 (LIAGITIASLAIPQGISYAKL). Residues 107 to 108 (AN) lie on the Extracellular side of the membrane. A helical transmembrane segment spans residues 109–129 (LPPILGLYSSFVPPLVYAVLG). The Cytoplasmic segment spans residues 130–133 (SSRD). Residues 134–154 (LAVGTVAVASLLTGAMLSKEV) form a helical membrane-spanning segment. Over 155–163 (DAEKDPKLY) the chain is Extracellular. A helical membrane pass occupies residues 164–184 (LHLAFTATFFAGVLEASLGIF). Residue Arg185 is a topological domain, cytoplasmic. A helical transmembrane segment spans residues 186–206 (LGFIVDFLSHATIVGFMGGAA). The Extracellular portion of the chain corresponds to 207–245 (TVVSLQQLKGIFGLKHFTDSTDVISVMRSVFSQTHEWRW). Residues 246-266 (ESGVLGCGFLFFLLSTRYFSI) traverse the membrane as a helical segment. Over 267-271 (KKPKF) the chain is Cytoplasmic. A helical membrane pass occupies residues 272 to 292 (FWVAAMAPLTSVILGSLLVYF). Residues 293–332 (THAERHGVQVIGDLKKGLNPLSGSDLIFTSPYMSTAVKTG) lie on the Extracellular side of the membrane. A helical transmembrane segment spans residues 333–353 (LITGIIALAEGVAVGRSFAMF). The Cytoplasmic segment spans residues 354-363 (KNYNIDGNKE). The chain crosses the membrane as a helical span at residues 364–384 (MIAFGMMNIVGSFTSCYLTTG). The Extracellular portion of the chain corresponds to 385–398 (PFSRSAVNYNAGCK). The helical transmembrane segment at 399-419 (TAMSNIVMAIAVMFTLLFLTP) threads the bilayer. The Cytoplasmic portion of the chain corresponds to 420–425 (LFHYTP). The helical transmembrane segment at 426 to 446 (LVVLSAIIISAMLGLIDYQAA) threads the bilayer. Residues 447–464 (IHLWKVDKFDFLVCMSAY) are Extracellular-facing. A helical transmembrane segment spans residues 465–485 (VGVVFGSVEIGLVVAVAISIA). At 486–658 (RLLLFVSRPK…ASKNEPWNNV (173 aa)) the chain is on the cytoplasmic side. In terms of domain architecture, STAS spans 513 to 637 (QYPSSRTVPG…LTVGEAVEAC (125 aa)).

The protein belongs to the SLC26A/SulP transporter (TC 2.A.53) family. As to expression, expressed only in leaves.

Its subcellular location is the membrane. Its function is as follows. H(+)/sulfate cotransporter that may play a role in the regulation of sulfate assimilation. This Arabidopsis thaliana (Mouse-ear cress) protein is Sulfate transporter 3.1 (SULTR3;1).